A 469-amino-acid chain; its full sequence is Phosphoenolpyruvate carboxylase (469 aa).

Belongs to the PEPCase type 2 family. As to quaternary structure, homotetramer. It depends on Mg(2+) as a cofactor.

It catalyses the reaction oxaloacetate + phosphate = phosphoenolpyruvate + hydrogencarbonate. Its function is as follows. Catalyzes the irreversible beta-carboxylation of phosphoenolpyruvate (PEP) to form oxaloacetate (OAA), a four-carbon dicarboxylic acid source for the tricarboxylic acid cycle. The polypeptide is Phosphoenolpyruvate carboxylase (Pyrococcus horikoshii (strain ATCC 700860 / DSM 12428 / JCM 9974 / NBRC 100139 / OT-3)).